We begin with the raw amino-acid sequence, 254 residues long: U3 small nucleolar RNA-associated protein NOL7 (254 aa).

The disordered stretch occupies residues 1-90; the sequence is MVQLRPRLSR…ASARRDKTLL (90 aa). Acidic residues-rich tracts occupy residues 18-31 and 48-61; these read MVDE…EEEA and PLDE…EAPE. A compositionally biased stretch (basic and acidic residues) spans 71–90; that stretch reads EAREEELRVRASARRDKTLL. Lys-127 is covalently cross-linked (Glycyl lysine isopeptide (Lys-Gly) (interchain with G-Cter in SUMO2)). Ser-129 carries the post-translational modification Phosphoserine. Residue Lys-157 forms a Glycyl lysine isopeptide (Lys-Gly) (interchain with G-Cter in SUMO2) linkage. The tract at residues 235 to 254 is disordered; the sequence is NAKRFKKRWMAKKMKKKTYK.

Belongs to the UTP16 family. Part of the small subunit (SSU) processome, composed of more than 70 proteins and the RNA chaperone small nucleolar RNA (snoRNA) U3.

It localises to the nucleus. Its subcellular location is the nucleolus. Functions as part of the small subunit (SSU) processome, first precursor of the small eukaryotic ribosomal subunit that coordinates the first two steps of ribosome biogenesis in transcription of the primary transcript pre-RNA and pre-18S processing. During the assembly of the SSU processome in the nucleolus, many ribosome biogenesis factors, an RNA chaperone and ribosomal proteins associate with the nascent pre-rRNA and work in concert to generate RNA folding, modifications, rearrangements and cleavage as well as targeted degradation of pre-ribosomal RNA by the RNA exosome. This subunit is required for processing of the 5'-external transcribed spacer sequence (5'ETS) of the primary transcript pre-rRNA to yield the 18S rRNA. Also plays a role in maintaining early pre-rRNA levels, either by assisting in its transcription or stability. This chain is U3 small nucleolar RNA-associated protein NOL7 (Nol7), found in Mus musculus (Mouse).